A 370-amino-acid polypeptide reads, in one-letter code: Accessory Sec system protein translocase subunit SecY2 (370 aa).

Helical transmembrane passes span 17–37 (IIFT…PAIT), 65–85 (VFSL…LFYY), 105–125 (IFTL…LLSH), 134–154 (WLII…SDLN), 155–175 (MRFG…RSIM), 188–208 (LLIS…FIEI), 240–260 (IAIM…NLIV), 276–296 (FSTP…SYGI), and 339–359 (WIGA…TLLI).

It belongs to the SecY/SEC61-alpha family. SecY2 subfamily. As to quaternary structure, component of the accessory SecA2/SecY2 protein translocase complex required to export cell wall proteins. May form heterotrimers with SecE and SecG subunits.

It localises to the cell membrane. Its function is as follows. Part of the accessory SecA2/SecY2 system specifically required for export of possible cell wall proteins. The central subunit of a protein translocation channel. In Staphylococcus carnosus (strain TM300), this protein is Accessory Sec system protein translocase subunit SecY2.